The chain runs to 390 residues: Magnesium-protoporphyrin IX monomethyl ester [oxidative] cyclase (390 aa).

It belongs to the AcsF family. It depends on Fe cation as a cofactor.

It catalyses the reaction Mg-protoporphyrin IX 13-monomethyl ester + 3 NADPH + 3 O2 + 2 H(+) = 3,8-divinyl protochlorophyllide a + 3 NADP(+) + 5 H2O. It functions in the pathway porphyrin-containing compound metabolism; chlorophyll biosynthesis (light-independent). Catalyzes the formation of the isocyclic ring in chlorophyll biosynthesis. Mediates the cyclase reaction, which results in the formation of divinylprotochlorophyllide (Pchlide) characteristic of all chlorophylls from magnesium-protoporphyrin IX 13-monomethyl ester (MgPMME). This chain is Magnesium-protoporphyrin IX monomethyl ester [oxidative] cyclase, found in Prochlorococcus marinus subsp. pastoris (strain CCMP1986 / NIES-2087 / MED4).